We begin with the raw amino-acid sequence, 207 residues long: 8-oxoguanine DNA glycosylase/AP lyase (207 aa).

Catalysis depends on residues Lys128 and Asp146.

It belongs to the type-2 OGG1 family.

It catalyses the reaction 2'-deoxyribonucleotide-(2'-deoxyribose 5'-phosphate)-2'-deoxyribonucleotide-DNA = a 3'-end 2'-deoxyribonucleotide-(2,3-dehydro-2,3-deoxyribose 5'-phosphate)-DNA + a 5'-end 5'-phospho-2'-deoxyribonucleoside-DNA + H(+). Catalyzes the excision of an oxidatively damaged form of guanine (7,8-dihydro-8-oxoguanine = 8-oxoG) from DNA. Also cleaves the DNA backbone at apurinic/apyrimidinic sites (AP sites). The polypeptide is 8-oxoguanine DNA glycosylase/AP lyase (Saccharolobus solfataricus (strain ATCC 35092 / DSM 1617 / JCM 11322 / P2) (Sulfolobus solfataricus)).